A 288-amino-acid polypeptide reads, in one-letter code: Chitinase 5 (288 aa).

The signal sequence occupies residues 1–29; sequence MANSPTPTMLAFLALGLALLLSATGQASA. A Chitin-binding type-1 domain is found at 30–64; that stretch reads QNCGCQSNMCCSKWGYCGTGKDYCGDGCRSGPCYG. 7 disulfide bridges follow: C32–C40, C34–C46, C39–C53, C57–C62, C107–C156, C169–C178, and C256–C288. The active-site Proton donor is the E151.

This sequence belongs to the glycosyl hydrolase 19 family. Chitinase class IV subfamily. As to expression, expressed in sheaths and meristems and at lower levels in roots and leaves.

The enzyme catalyses Random endo-hydrolysis of N-acetyl-beta-D-glucosaminide (1-&gt;4)-beta-linkages in chitin and chitodextrins.. Functionally, may function in reproductive organs during embryogenesis and seed maturation. The protein is Chitinase 5 (Cht5) of Oryza sativa subsp. japonica (Rice).